Here is a 548-residue protein sequence, read N- to C-terminus: Chaperonin GroEL (548 aa).

Residues 29-32 (TLGP), Lys-50, 86-90 (DGTTT), Gly-416, and Asp-497 each bind ATP.

The protein belongs to the chaperonin (HSP60) family. As to quaternary structure, forms a cylinder of 14 subunits composed of two heptameric rings stacked back-to-back. Interacts with the co-chaperonin GroES.

Its subcellular location is the cytoplasm. The enzyme catalyses ATP + H2O + a folded polypeptide = ADP + phosphate + an unfolded polypeptide.. Functionally, together with its co-chaperonin GroES, plays an essential role in assisting protein folding. The GroEL-GroES system forms a nano-cage that allows encapsulation of the non-native substrate proteins and provides a physical environment optimized to promote and accelerate protein folding. The protein is Chaperonin GroEL of Neorickettsia risticii (Ehrlichia risticii).